A 431-amino-acid polypeptide reads, in one-letter code: MANSC domain-containing protein 1 (431 aa).

Residues 1–26 form the signal peptide; it reads MFFGGKGSLTYTLVIICFLTLRLAAS. Topologically, residues 27–385 are extracellular; it reads QNCLNKSLED…QYGLPFEKWL (359 aa). Residue Asn-31 is glycosylated (N-linked (GlcNAc...) asparagine). Residues 33–117 form the MANSC domain; the sequence is SLEDVVIDIQ…LKPAKGLRSY (85 aa). N-linked (GlcNAc...) asparagine glycosylation is found at Asn-222 and Asn-251. The tract at residues 236–279 is disordered; the sequence is HTTSATPKPAIRLPTNASVTPSGTSQPQLATTSPPVTTVTSQPP. A compositionally biased stretch (polar residues) spans 250-265; the sequence is TNASVTPSGTSQPQLA. The span at 266 to 279 shows a compositional bias: low complexity; it reads TTSPPVTTVTSQPP. N-linked (GlcNAc...) asparagine glycosylation is found at Asn-327 and Asn-352. Residues 352-372 are disordered; the sequence is NKTASWEGREASPGRSSQGNV. The chain crosses the membrane as a helical span at residues 386–408; it reads LIGSLLFGVLFLVIGLVLLGRIL. Residues 409 to 431 lie on the Cytoplasmic side of the membrane; that stretch reads SESLRRKRYSRLDYLINGIYVDI.

It localises to the membrane. The polypeptide is MANSC domain-containing protein 1 (MANSC1) (Macaca fascicularis (Crab-eating macaque)).